A 658-amino-acid chain; its full sequence is Biosynthetic arginine decarboxylase (658 aa).

Residue K127 is modified to N6-(pyridoxal phosphate)lysine. Substrate is bound at residue 307 to 317; sequence FDVGGGLGVDY.

This sequence belongs to the Orn/Lys/Arg decarboxylase class-II family. SpeA subfamily. Homotetramer. Pyridoxal 5'-phosphate serves as cofactor. It depends on Mg(2+) as a cofactor. Post-translationally, processed post-translationally to a 70 kDa mature form. In terms of processing, the N-terminus is blocked.

It is found in the periplasm. The enzyme catalyses L-arginine + H(+) = agmatine + CO2. It participates in amine and polyamine biosynthesis; agmatine biosynthesis; agmatine from L-arginine: step 1/1. With respect to regulation, down-regulated by polyamine end products putrescine and spermidine. Its function is as follows. Catalyzes the biosynthesis of agmatine from arginine. The polypeptide is Biosynthetic arginine decarboxylase (speA) (Escherichia coli (strain K12)).